The chain runs to 265 residues: Undecaprenyl-diphosphatase (265 aa).

The next 7 helical transmembrane spans lie at 41-61, 75-95, 104-124, 137-157, 180-200, 215-235, and 244-264; these read IAYT…LIYF, LKFL…LYVI, YNPS…GIYI, LSTK…LPGV, YSYL…LLFT, GIAL…GFLL, and YLID…GLII.

The protein belongs to the UppP family.

The protein localises to the cell membrane. It catalyses the reaction di-trans,octa-cis-undecaprenyl diphosphate + H2O = di-trans,octa-cis-undecaprenyl phosphate + phosphate + H(+). Its function is as follows. Catalyzes the dephosphorylation of undecaprenyl diphosphate (UPP). The chain is Undecaprenyl-diphosphatase from Saccharolobus islandicus (strain Y.N.15.51 / Yellowstone #2) (Sulfolobus islandicus).